A 175-amino-acid polypeptide reads, in one-letter code: Isopentenyl-diphosphate Delta-isomerase (175 aa).

Mn(2+)-binding residues include His23 and His30. Positions Thr28–Arg162 constitute a Nudix hydrolase domain. Cys65 is an active-site residue. His67 is a Mn(2+) binding site. Glu85 contributes to the Mg(2+) binding site. Residues Glu111 and Glu113 each contribute to the Mn(2+) site. Glu113 is a catalytic residue.

This sequence belongs to the IPP isomerase type 1 family. Mg(2+) is required as a cofactor. The cofactor is Mn(2+).

The protein resides in the cytoplasm. The catalysed reaction is isopentenyl diphosphate = dimethylallyl diphosphate. Its pathway is isoprenoid biosynthesis; dimethylallyl diphosphate biosynthesis; dimethylallyl diphosphate from isopentenyl diphosphate: step 1/1. Catalyzes the 1,3-allylic rearrangement of the homoallylic substrate isopentenyl (IPP) to its highly electrophilic allylic isomer, dimethylallyl diphosphate (DMAPP). The sequence is that of Isopentenyl-diphosphate Delta-isomerase from Halorhodospira halophila (strain DSM 244 / SL1) (Ectothiorhodospira halophila (strain DSM 244 / SL1)).